Reading from the N-terminus, the 316-residue chain is Ribosomal RNA small subunit methyltransferase H (316 aa).

S-adenosyl-L-methionine-binding positions include 35–37, Asp-55, Phe-84, Asp-105, and Gln-112; that span reads AGH.

Belongs to the methyltransferase superfamily. RsmH family.

It localises to the cytoplasm. The catalysed reaction is cytidine(1402) in 16S rRNA + S-adenosyl-L-methionine = N(4)-methylcytidine(1402) in 16S rRNA + S-adenosyl-L-homocysteine + H(+). Its function is as follows. Specifically methylates the N4 position of cytidine in position 1402 (C1402) of 16S rRNA. The sequence is that of Ribosomal RNA small subunit methyltransferase H from Streptococcus mutans serotype c (strain ATCC 700610 / UA159).